Here is a 352-residue protein sequence, read N- to C-terminus: Beta-hexosaminidase (352 aa).

Residues Asp-74, Arg-82, Arg-149, and 179–180 (KH) each bind substrate. The Proton donor/acceptor role is filled by His-192. Asp-263 serves as the catalytic Nucleophile.

It belongs to the glycosyl hydrolase 3 family. NagZ subfamily.

Its subcellular location is the cytoplasm. The catalysed reaction is Hydrolysis of terminal non-reducing N-acetyl-D-hexosamine residues in N-acetyl-beta-D-hexosaminides.. It participates in cell wall biogenesis; peptidoglycan recycling. Its function is as follows. Plays a role in peptidoglycan recycling by cleaving the terminal beta-1,4-linked N-acetylglucosamine (GlcNAc) from peptide-linked peptidoglycan fragments, giving rise to free GlcNAc, anhydro-N-acetylmuramic acid and anhydro-N-acetylmuramic acid-linked peptides. The polypeptide is Beta-hexosaminidase (Bordetella pertussis (strain Tohama I / ATCC BAA-589 / NCTC 13251)).